The sequence spans 609 residues: Frizzled and smoothened-like protein E (609 aa).

The N-terminal stretch at 1-20 (MEMIRIFLIYLILKIIIING) is a signal peptide. Over 21–259 (ENNEYSKGYG…QWKRVYDMAK (239 aa)) the chain is Extracellular. The region spanning 35 to 192 (FPGSKCLNYV…GLYKVPCIDP (158 aa)) is the FZ domain. 4 disulfide bridges follow: Cys-40/Cys-118, Cys-53/Cys-111, Cys-100/Cys-149, and Cys-138/Cys-189. N-linked (GlcNAc...) asparagine glycans are attached at residues Asn-75, Asn-130, Asn-172, Asn-198, Asn-217, and Asn-245. The chain crosses the membrane as a helical span at residues 260 to 280 (TLSSISFICACYNILTFGILN). Residues 281-288 (RKRKSKYN) lie on the Cytoplasmic side of the membrane. Residues 289-309 (ICITLMSTSIALVYLTDIIKF) form a helical membrane-spanning segment. Residues 310–337 (GYGIEEFLCPEPGRSAVQNDAACGITGA) lie on the Extracellular side of the membrane. The helical transmembrane segment at 338-358 (MFHFGITYCCCWAMTMSIVLF) threads the bilayer. At 359-365 (CSVKRIK) the chain is on the cytoplasmic side. A helical transmembrane segment spans residues 366–386 (LFYFRHFMIGNTIFTIITTVI). Residues 387–408 (LLSAKKMVAGTGYIECWVRERW) lie on the Extracellular side of the membrane. A helical transmembrane segment spans residues 409–429 (FVITLFWLPCGIGLSIGIFCI). Topologically, residues 430 to 457 (GGVIHEIYNISKKVNIRESEFILRQIKP) are cytoplasmic. The chain crosses the membrane as a helical span at residues 458 to 478 (FSLVFSVAGSFLYLFIFFFDV). At 479–511 (ERKIDSYKAAVADYVLCLLSGGSEETCFTTGPN) the chain is on the extracellular side. The chain crosses the membrane as a helical span at residues 512 to 532 (YASFFIFYFFIRVFGVLFFSI). The Cytoplasmic portion of the chain corresponds to 533 to 609 (YGTSRVARDI…DSKSIELEKK (77 aa)). Over residues 559 to 570 (ESGISRNNSRTD) the composition is skewed to polar residues. Positions 559 to 609 (ESGISRNNSRTDISFGKNNNSKNSNNSKNSNNSKNSNNSDNDSKSIELEKK) are disordered. Residues 575 to 598 (KNNNSKNSNNSKNSNNSKNSNNSD) are compositionally biased toward low complexity. A compositionally biased stretch (basic and acidic residues) spans 599–609 (NDSKSIELEKK).

This sequence belongs to the G-protein coupled receptor Fz/Smo family.

Its subcellular location is the membrane. This chain is Frizzled and smoothened-like protein E (fslE), found in Dictyostelium discoideum (Social amoeba).